The following is a 226-amino-acid chain: Ribosomal RNA small subunit methyltransferase G (226 aa).

S-adenosyl-L-methionine contacts are provided by residues glycine 95, leucine 100, 146–147 (VE), and arginine 159.

Belongs to the methyltransferase superfamily. RNA methyltransferase RsmG family.

Its subcellular location is the cytoplasm. The enzyme catalyses guanosine(527) in 16S rRNA + S-adenosyl-L-methionine = N(7)-methylguanosine(527) in 16S rRNA + S-adenosyl-L-homocysteine. Specifically methylates the N7 position of guanine in position 527 of 16S rRNA. This Acidovorax ebreus (strain TPSY) (Diaphorobacter sp. (strain TPSY)) protein is Ribosomal RNA small subunit methyltransferase G.